The chain runs to 103 residues: uncharacterized protein (103 aa).

The helical transmembrane segment at 37-57 (FILLSSLLIGGLLITIACYHI) threads the bilayer.

It localises to the membrane. This is an uncharacterized protein from Saccharomyces cerevisiae (strain ATCC 204508 / S288c) (Baker's yeast).